The chain runs to 413 residues: Serine/threonine transporter SstT (413 aa).

The next 9 membrane-spanning stretches (helical) occupy residues 11–31 (IANG…VILA), 43–63 (FLGS…VFVL), 82–102 (IIGL…LFSF), 141–161 (ALLT…GITM), 192–212 (IGIF…ALAG), 216–236 (LLMV…PIIV), 298–318 (MGGA…TLGI), 339–359 (ASGV…LFGI), and 363–383 (VAMQ…SAET).

It belongs to the dicarboxylate/amino acid:cation symporter (DAACS) (TC 2.A.23) family.

It is found in the cell inner membrane. It catalyses the reaction L-serine(in) + Na(+)(in) = L-serine(out) + Na(+)(out). It carries out the reaction L-threonine(in) + Na(+)(in) = L-threonine(out) + Na(+)(out). Its function is as follows. Involved in the import of serine and threonine into the cell, with the concomitant import of sodium (symport system). The sequence is that of Serine/threonine transporter SstT from Shewanella frigidimarina (strain NCIMB 400).